Here is a 273-residue protein sequence, read N- to C-terminus: Formamidopyrimidine-DNA glycosylase (273 aa).

Residue proline 2 is the Schiff-base intermediate with DNA of the active site. The active-site Proton donor is the glutamate 3. The active-site Proton donor; for beta-elimination activity is lysine 57. Residues histidine 90, arginine 109, and lysine 150 each contribute to the DNA site. An FPG-type zinc finger spans residues lysine 235–phenylalanine 269. Arginine 259 serves as the catalytic Proton donor; for delta-elimination activity.

Belongs to the FPG family. In terms of assembly, monomer. The cofactor is Zn(2+).

It carries out the reaction Hydrolysis of DNA containing ring-opened 7-methylguanine residues, releasing 2,6-diamino-4-hydroxy-5-(N-methyl)formamidopyrimidine.. The catalysed reaction is 2'-deoxyribonucleotide-(2'-deoxyribose 5'-phosphate)-2'-deoxyribonucleotide-DNA = a 3'-end 2'-deoxyribonucleotide-(2,3-dehydro-2,3-deoxyribose 5'-phosphate)-DNA + a 5'-end 5'-phospho-2'-deoxyribonucleoside-DNA + H(+). Its function is as follows. Involved in base excision repair of DNA damaged by oxidation or by mutagenic agents. Acts as a DNA glycosylase that recognizes and removes damaged bases. Has a preference for oxidized purines, such as 7,8-dihydro-8-oxoguanine (8-oxoG). Has AP (apurinic/apyrimidinic) lyase activity and introduces nicks in the DNA strand. Cleaves the DNA backbone by beta-delta elimination to generate a single-strand break at the site of the removed base with both 3'- and 5'-phosphates. This chain is Formamidopyrimidine-DNA glycosylase, found in Aliivibrio fischeri (strain MJ11) (Vibrio fischeri).